The primary structure comprises 90 residues: Phosphoribosyl-ATP pyrophosphatase (90 aa).

It belongs to the PRA-PH family.

It localises to the cytoplasm. It carries out the reaction 1-(5-phospho-beta-D-ribosyl)-ATP + H2O = 1-(5-phospho-beta-D-ribosyl)-5'-AMP + diphosphate + H(+). It functions in the pathway amino-acid biosynthesis; L-histidine biosynthesis; L-histidine from 5-phospho-alpha-D-ribose 1-diphosphate: step 2/9. This chain is Phosphoribosyl-ATP pyrophosphatase (hisE), found in Streptomyces coelicolor (strain ATCC BAA-471 / A3(2) / M145).